Here is a 169-residue protein sequence, read N- to C-terminus: MERAIFAGGCFWCMVQPFEELDGIESVLSGYTGGHVENPTYKEVCSKTTGHTEAVEIIFNPEKISYADLVELYWAQTDPTDAFGQFEDRGDNYRPVIFYENEEQRQIAQKSKDKLQASGRFDRPIVTSIEPADTFYPAEDYHQAFYRTNPARYALSSARRHAFLEENWH.

Residue cysteine 10 is part of the active site.

This sequence belongs to the MsrA Met sulfoxide reductase family.

The enzyme catalyses L-methionyl-[protein] + [thioredoxin]-disulfide + H2O = L-methionyl-(S)-S-oxide-[protein] + [thioredoxin]-dithiol. The catalysed reaction is [thioredoxin]-disulfide + L-methionine + H2O = L-methionine (S)-S-oxide + [thioredoxin]-dithiol. In terms of biological role, has an important function as a repair enzyme for proteins that have been inactivated by oxidation. Catalyzes the reversible oxidation-reduction of methionine sulfoxide in proteins to methionine. This Streptococcus agalactiae serotype Ia (strain ATCC 27591 / A909 / CDC SS700) protein is Peptide methionine sulfoxide reductase MsrA.